Consider the following 820-residue polypeptide: Trimethylamine-N-oxide reductase (820 aa).

A signal peptide (tat-type signal) is located at residues 1-33 (MAITRRSFLKGVATTSAASIIGPSLLTSVSAQA). Residue Ser-179 participates in Mo-bis(molybdopterin guanine dinucleotide) binding.

The protein belongs to the prokaryotic molybdopterin-containing oxidoreductase family. Mo-bis(molybdopterin guanine dinucleotide) is required as a cofactor. Post-translationally, predicted to be exported by the Tat system. The position of the signal peptide cleavage has not been experimentally proven.

Its subcellular location is the periplasm. It catalyses the reaction trimethylamine + 2 Fe(III)-[cytochrome c] + H2O = trimethylamine N-oxide + 2 Fe(II)-[cytochrome c] + 3 H(+). In terms of biological role, reduces trimethylamine-N-oxide (TMAO) into trimethylamine; an anaerobic reaction coupled to energy-yielding reactions. The chain is Trimethylamine-N-oxide reductase (torA) from Vibrio cholerae serotype O1 (strain ATCC 39315 / El Tor Inaba N16961).